The sequence spans 1273 residues: MTDITLPPGDGSIQRVEPVDIQQEMQRSYIDYAMSVIVGRALPEVRDGLKPVHRRVLYAMLDSGFRPDRSHAKSARSVAETMGNYHPHGDASIYDTLVRMAQPWSLRYPLVDGQGNFGSPGNDPPAAMRYCVSGNSLVRLLFGKSIRIGDIVTGAQFNSDNPIDLKVLDRHGNPVVADYLFHSGEHQTYTVRTTEGYEITGTSNHPLLCLVNVGGIPTLLWKLIGEIRSGDYVVLQRIPPVEFGPADWYSTMEALLFGAFISGGFVFQDHAGFNSLDRDYFTMVVNAYDTVVGGLRCISSRITVSGSTLLELDVYNLIEFKKTRLSGLCGQRSADKLVPDWLWHSPSTVKRAFLQALFEGEGFSSILSRNIIEISYSTLSERLAADVQQMLLEFGVVSERYCHTVNEYKVVIANRAQVEMFFTQVGFGVTKQAKLIRDVVSMSPCVGMDINCVPGLATFIRKHCDNRWVEEDSFNQHNVDCVQHWHHHSAEIVGHIADPDIRAIVTDLTDGRFYYARVASVTDTGIQPVFSLHVDTEDHSFLTNGFISHNTEARLTPLAMEMLREIDEETVDFISNYDGRVQEPMVLPSRFPNLLANGSGGIAVGMATNIPPHNLYELADAVFWCLENHDADEETMLVAVMERVKGPDFPTAGLIVGSQGIADAYKTGRGSIRIRGVVEVEEDSRGRTSLVITELPYQVNHDNFITSIAEQVRTGRLAGISNVEDQGSDRVGVRIVIEIKRDAVAKVVLNNLYKHTQLQTSFGANMLSIVDGVPRTLRLDQMICYYVEHQLDVIVRRTTYRLRKANERAHILRGLVKALDALDEVITLIRASQTVDIARVGVVELLDIDDIQAQAILDMQLRRLAALERQRIIDDLAKIEVEIADLGDILAKPERRRGIIRNELTEIAEKYGDDRRTRIIAVDGDVNDEDLIAREEVVVTITETGYAKRTKTDLYRSQKRGGKGVQGAGLKQDDIVRHFFVCSTHDWILFFTTQGRVYRAKAYELPEASRTARGQHVANLLAFQPEERIAQVIQIRSYEDAPYLVLATRAGLVKKSKLTDFDSNRSGGIVAINLRDNDELVGAVLCAADGDLLLVSANGQSIRFSATDEALRPMGRATSGVQGMRFNADDRLLSLNVVREDTYLLVATSGGYAKRTSIEEYPMQGRGGKGVLTVMYDRRRGSLVGAIVVDEDSELYAITSGGGVIRTTARQVRQAGRQTKGVRLMNLGEGDTLLAIARNAEESADGVSVKVMISRSRVLSFFGSDSNTSPDRT.

The region spanning 42–931 (LPEVRDGLKP…VDGDVNDEDL (890 aa)) is the Topo IIA-type catalytic domain. Tyrosine 130 serves as the catalytic O-(5'-phospho-DNA)-tyrosine intermediate. A DOD-type homing endonuclease domain is found at 256 to 396 (LFGAFISGGF…VQQMLLEFGV (141 aa)). The GyrA-box motif lies at 958-964 (QKRGGKG).

The protein belongs to the type II topoisomerase GyrA/ParC subunit family. Heterotetramer, composed of two GyrA and two GyrB chains. In the heterotetramer, GyrA contains the active site tyrosine that forms a transient covalent intermediate with the DNA, while GyrB binds cofactors catalyzes ATP hydrolysis. In terms of processing, this protein undergoes a protein self splicing that involves a post-translational excision of the intervening region (intein) followed by peptide ligation.

It is found in the cytoplasm. It carries out the reaction ATP-dependent breakage, passage and rejoining of double-stranded DNA.. With respect to regulation, DNA supercoiling is inhibited by fluoroquinolones; IC(50) 1 ug/ml for sitafloxacin. Its function is as follows. A type II topoisomerase that negatively supercoils closed circular double-stranded (ds) DNA in an ATP-dependent manner to modulate DNA topology and maintain chromosomes in an underwound state. Negative supercoiling favors strand separation, and DNA replication, transcription, recombination and repair, all of which involve strand separation. Also able to catalyze the interconversion of other topological isomers of dsDNA rings, including catenanes and knotted rings. Type II topoisomerases break and join 2 DNA strands simultaneously in an ATP-dependent manner. The sequence is that of DNA gyrase subunit A from Mycobacterium leprae (strain TN).